The sequence spans 104 residues: uncharacterized protein (104 aa).

The first 18 residues, 1–18, serve as a signal peptide directing secretion; that stretch reads MGVEGMWNVFLFSLQVAA. The N-linked (GlcNAc...) asparagine; by host glycan is linked to Asn-27.

This is an uncharacterized protein from Fowl adenovirus A serotype 1 (strain CELO / Phelps) (FAdV-1).